The following is a 119-amino-acid chain: MARVKRAMNARKRHKKVLKLAKGYYGGKSKLFKTANESVIRALRNAYVGRKLKKRDYRKLWIARINAATRMNGLSYSKFMNGIKNAGIDINRKMLSEIAINDPKAFAELVDVAKKQLNA.

The protein belongs to the bacterial ribosomal protein bL20 family.

Functionally, binds directly to 23S ribosomal RNA and is necessary for the in vitro assembly process of the 50S ribosomal subunit. It is not involved in the protein synthesizing functions of that subunit. This chain is Large ribosomal subunit protein bL20, found in Clostridium botulinum (strain ATCC 19397 / Type A).